Consider the following 489-residue polypeptide: Putative ABC transporter ATP-binding protein TDE_0282 (489 aa).

ABC transporter domains are found at residues 2–241 (ITLR…SMKL) and 269–487 (FAVK…MQLE). ATP is bound by residues 36–43 (GASGCGKT) and 301–308 (GENGAGKT).

Belongs to the ABC transporter superfamily.

It localises to the cell inner membrane. In terms of biological role, probably part of an ABC transporter complex. Responsible for energy coupling to the transport system. This chain is Putative ABC transporter ATP-binding protein TDE_0282, found in Treponema denticola (strain ATCC 35405 / DSM 14222 / CIP 103919 / JCM 8153 / KCTC 15104).